Here is a 293-residue protein sequence, read N- to C-terminus: NAD kinase (293 aa).

Residue Asp-72 is the Proton acceptor of the active site. NAD(+) contacts are provided by residues 72–73, 146–147, Arg-157, Arg-174, Asp-176, 187–192, and Gln-247; these read DG, ND, and TAYALS.

It belongs to the NAD kinase family. A divalent metal cation is required as a cofactor.

Its subcellular location is the cytoplasm. The enzyme catalyses NAD(+) + ATP = ADP + NADP(+) + H(+). Functionally, involved in the regulation of the intracellular balance of NAD and NADP, and is a key enzyme in the biosynthesis of NADP. Catalyzes specifically the phosphorylation on 2'-hydroxyl of the adenosine moiety of NAD to yield NADP. The chain is NAD kinase from Teredinibacter turnerae (strain ATCC 39867 / T7901).